The sequence spans 319 residues: MSLNFLDFEQPIAELEAKIDSLTAVSRQDEKLDINIDEEVHRLREKSVELTRKIFADLGAWQIAQLARHPQRPYTLDYVRLAFDEFDELAGDRAYADDKAIVGGIARLDGRPVMIIGHQKGRETKEKIRRNFGMPAPEGYRKALRLMQMAERFKMPIITFIDTPGAYPGVGAEERGQSEAIARNLREMSRLGVPVVCTVIGEGGSGGALAIGVGDKVNMLQYSTYSVISPEGCASILWKSADKAPLAAEAMGIIAPRLKELKLIDSIIPEPLGGAHRNPEAMAVSLKAQLLADLADLDVLSTEDLKNRRYQRLMSYGYA.

Residues 35 to 296 form the CoA carboxyltransferase C-terminal domain; it reads NIDEEVHRLR…KAQLLADLAD (262 aa).

The protein belongs to the AccA family. As to quaternary structure, acetyl-CoA carboxylase is a heterohexamer composed of biotin carboxyl carrier protein (AccB), biotin carboxylase (AccC) and two subunits each of ACCase subunit alpha (AccA) and ACCase subunit beta (AccD).

The protein resides in the cytoplasm. The catalysed reaction is N(6)-carboxybiotinyl-L-lysyl-[protein] + acetyl-CoA = N(6)-biotinyl-L-lysyl-[protein] + malonyl-CoA. It functions in the pathway lipid metabolism; malonyl-CoA biosynthesis; malonyl-CoA from acetyl-CoA: step 1/1. Functionally, component of the acetyl coenzyme A carboxylase (ACC) complex. First, biotin carboxylase catalyzes the carboxylation of biotin on its carrier protein (BCCP) and then the CO(2) group is transferred by the carboxyltransferase to acetyl-CoA to form malonyl-CoA. This chain is Acetyl-coenzyme A carboxylase carboxyl transferase subunit alpha, found in Shigella sonnei (strain Ss046).